Reading from the N-terminus, the 1485-residue chain is Glutamate receptor ionotropic, NMDA 2B (1485 aa).

Positions 1–26 (MKPRAECCSPKFWLVLAVLAVSGSRA) are cleaved as a signal peptide. Over 27-557 (RSQKSPPSIG…SAFLEPFSAD (531 aa)) the chain is Extracellular. N-linked (GlcNAc...) asparagine glycosylation occurs at asparagine 74. Residues cysteine 86 and cysteine 321 are joined by a disulfide bond. Zn(2+) contacts are provided by histidine 127 and glutamate 284. Residues asparagine 341, asparagine 348, asparagine 444, and asparagine 491 are each glycosylated (N-linked (GlcNAc...) asparagine). 2 disulfide bridges follow: cysteine 429–cysteine 456 and cysteine 436–cysteine 457. L-glutamate-binding residues include threonine 514 and arginine 519. Residue asparagine 542 is glycosylated (N-linked (GlcNAc...) asparagine). Residues 558-576 (VWVMMFVMLLIVSAVAVFV) form a helical membrane-spanning segment. Residues 577-603 (FEYFSPVGYNRCLADGREPGGPSFTIG) are Cytoplasmic-facing. An intramembrane region (discontinuously helical) is located at residues 604-623 (KAIWLLWGLVFNNSVPVQNP). Residues 604-623 (KAIWLLWGLVFNNSVPVQNP) form a pore-forming region. Over 624 to 630 (KGTTSKI) the chain is Cytoplasmic. The helical transmembrane segment at 631 to 646 (MVSVWAFFAVIFLASY) threads the bilayer. Over 647–817 (TANLAAFMIQ…VMSSQLDIDN (171 aa)) the chain is Extracellular. Asparagine 688 carries an N-linked (GlcNAc...) asparagine glycan. L-glutamate is bound by residues 690–691 (ST) and aspartate 732. A disulfide bridge links cysteine 746 with cysteine 801. The helical transmembrane segment at 818–837 (MAGVFYMLGAAMALSLITFI) threads the bilayer. Topologically, residues 838 to 1485 (CEHLFYWQFR…EKLSSIESDV (648 aa)) are cytoplasmic. A phosphoserine mark is found at serine 882, serine 886, serine 917, and serine 920. A phosphotyrosine mark is found at tyrosine 962 and tyrosine 1039. Phosphoserine is present on residues serine 1058, serine 1061, and serine 1064. The segment at 1074-1097 (EGNAAKRRKQQYKDSLKKRPASAK) is disordered. A phosphotyrosine mark is found at tyrosine 1109 and tyrosine 1133. Serine 1143 carries the phosphoserine modification. Tyrosine 1155 bears the Phosphotyrosine mark. The segment at 1162–1194 (FKRDSVSGGGPCTNRSHLKHGAGDKHGVVSGVP) is disordered. Residues serine 1255 and serine 1259 each carry the phosphoserine modification. Low complexity predominate over residues 1269-1278 (PVAVPSNAPS). The segment at 1269–1302 (PVAVPSNAPSTKYPQSPTNSKAQKKTRNKLRRQH) is disordered. The span at 1280 to 1289 (KYPQSPTNSK) shows a compositional bias: polar residues. Basic residues predominate over residues 1290 to 1301 (AQKKTRNKLRRQ). The tract at residues 1292 to 1304 (KKTRNKLRRQHSY) is interaction with DAPK1. Serine 1303 is modified (phosphoserine; by DAPK1). A Phosphotyrosine modification is found at tyrosine 1475. Positions 1483–1485 (SDV) match the PDZ-binding motif.

It belongs to the glutamate-gated ion channel (TC 1.A.10.1) family. NR2B/GRIN2B subfamily. As to quaternary structure, heterotetramer. Forms heterotetrameric channels composed of two GluN1/zeta subunits (GRIN1), and two identical GluN2/epsilon subunits (GRIN2A, GRIN2B, GRIN2C or GRIN2D) or GluN3 subunits (GRIN3A or GRIN3B) (in vitro). Can also form heterotetrameric channels that contain at least two GluN1 subunits and at least two different GluN2 subunits (or a combination of one GluN2 and one GluN3 subunits) (in vitro). In vivo, the subunit composition may depend on the expression levels of the different subunits. Found in a complex with GRIN1, GRIN3A and PPP2CB. Found in a complex with GRIN1 and GRIN3B. Interacts with MAGI3. Interacts with HIP1 and Neto1. Interacts with PDZ domains of PATJ, DLG3 and DLG4. Interacts with DAPK1. Found in a complex with GRIN1 and PRR7. Interacts with PRR7. Interacts with CAMK2A. Interacts with ARC; preventing ARC oligomerization. Interacts with TMEM25. Interacts (via the extreme C-terminus) with FRMPD2 (via the second PDZ domain); the interaction is direct and is likely to promote NMDAR-mediated neural signal transmission. Interacts with FAM81A; the interaction facilitates condensate formation via liquid-liquid phase separation. Post-translationally, phosphorylated on tyrosine residues. Phosphorylation at Ser-1303 by DAPK1 enhances synaptic NMDA receptor channel activity.

It is found in the cell membrane. The protein localises to the postsynaptic cell membrane. The protein resides in the cell projection. Its subcellular location is the dendrite. It localises to the late endosome. It is found in the lysosome. The protein localises to the cytoplasm. The protein resides in the cytoskeleton. The catalysed reaction is Ca(2+)(in) = Ca(2+)(out). The enzyme catalyses Na(+)(in) = Na(+)(out). It catalyses the reaction K(+)(in) = K(+)(out). Component of N-methyl-D-aspartate (NMDA) receptors (NMDARs) that function as heterotetrameric, ligand-gated cation channels with high calcium permeability and voltage-dependent block by Mg(2+). Participates in synaptic plasticity for learning and memory formation by contributing to the long-term depression (LTD) of hippocampus membrane currents. Channel activation requires binding of the neurotransmitter L-glutamate to the GluN2 subunit, glycine or D-serine binding to the GluN1 subunit, plus membrane depolarization to eliminate channel inhibition by Mg(2+). NMDARs mediate simultaneously the potasium efflux and the influx of calcium and sodium. Each GluN2 subunit confers differential attributes to channel properties, including activation, deactivation and desensitization kinetics, pH sensitivity, Ca2(+) permeability, and binding to allosteric modulators. In concert with DAPK1 at extrasynaptic sites, acts as a central mediator for stroke damage. Its phosphorylation at Ser-1303 by DAPK1 enhances synaptic NMDA receptor channel activity inducing injurious Ca2+ influx through them, resulting in an irreversible neuronal death. This Canis lupus familiaris (Dog) protein is Glutamate receptor ionotropic, NMDA 2B.